The following is a 151-amino-acid chain: Inactive oocyte-specific homeobox protein 2 (151 aa).

Residues 1–97 are disordered; that stretch reads MAEGPSLHPK…PMASRKFRKE (97 aa). Over residues 37–54 the composition is skewed to polar residues; it reads MRQSPLVTPGSTTKSSLS.

Belongs to the paired homeobox family. Obox subfamily. In terms of tissue distribution, specifically expressed in oocytes and early embryos.

Its function is as follows. In contrast to other Obox family proteins, displays a truncated homeobox domain and does not bind DNA. The sequence is that of Inactive oocyte-specific homeobox protein 2 from Mus musculus (Mouse).